The sequence spans 206 residues: Small ribosomal subunit protein uS4 (206 aa).

One can recognise an S4 RNA-binding domain in the interval 96 to 156 (CRLDNVVYRM…EKAKNQLRIV (61 aa)).

The protein belongs to the universal ribosomal protein uS4 family. In terms of assembly, part of the 30S ribosomal subunit. Contacts protein S5. The interaction surface between S4 and S5 is involved in control of translational fidelity.

Functionally, one of the primary rRNA binding proteins, it binds directly to 16S rRNA where it nucleates assembly of the body of the 30S subunit. With S5 and S12 plays an important role in translational accuracy. The sequence is that of Small ribosomal subunit protein uS4 from Pseudomonas fluorescens (strain SBW25).